The following is a 492-amino-acid chain: Aspartate aminotransferase (492 aa).

A chloroplast-targeting transit peptide spans 1–66 (MMSASFKCPV…KGSCCLFNIR (66 aa)). Gly-119, Trp-206, and Asn-256 together coordinate L-aspartate. Lys-319 is subject to N6-(pyridoxal phosphate)lysine. L-aspartate is bound at residue Arg-458.

This sequence belongs to the class-I pyridoxal-phosphate-dependent aminotransferase family. In terms of assembly, homodimer. Pyridoxal 5'-phosphate serves as cofactor.

It is found in the plastid. The protein resides in the chloroplast. The catalysed reaction is L-aspartate + 2-oxoglutarate = oxaloacetate + L-glutamate. Functionally, prokaryotic-type aspartate aminotransferase. Specific for aspartate and no activity with glutamine, asparagine, alanine, histidine, leucine, methionine, lysine, arginine, tryptophan, tyrosine, phenylalanine or kynurenine. The chain is Aspartate aminotransferase (AAT) from Pinus pinaster (Maritime pine).